Here is a 690-residue protein sequence, read N- to C-terminus: Elongation factor G (690 aa).

The tr-type G domain occupies 8–283 (DKYRNIGIMA…AVVDFLPSPL (276 aa)). GTP-binding positions include 17–24 (AHIDAGKT), 81–85 (DTPGH), and 135–138 (NKLD).

It belongs to the TRAFAC class translation factor GTPase superfamily. Classic translation factor GTPase family. EF-G/EF-2 subfamily.

Its subcellular location is the cytoplasm. Functionally, catalyzes the GTP-dependent ribosomal translocation step during translation elongation. During this step, the ribosome changes from the pre-translocational (PRE) to the post-translocational (POST) state as the newly formed A-site-bound peptidyl-tRNA and P-site-bound deacylated tRNA move to the P and E sites, respectively. Catalyzes the coordinated movement of the two tRNA molecules, the mRNA and conformational changes in the ribosome. This is Elongation factor G from Zymomonas mobilis subsp. mobilis (strain ATCC 31821 / ZM4 / CP4).